The chain runs to 313 residues: Olfactory receptor 1G1 (313 aa).

The Extracellular portion of the chain corresponds to 1 to 25 (MEGKNLTSISEFFLLGFSEQLEEQK). Asn-5 carries N-linked (GlcNAc...) asparagine glycosylation. Residues 26–49 (ALFGSFLFMYLVTVAGNLLIILVI) form a helical membrane-spanning segment. Topologically, residues 50-57 (ITDTQLHT) are cytoplasmic. Residues 58-79 (PMYFFLANLSLADACFVSTTVP) traverse the membrane as a helical segment. Over 80–100 (KMLANIQIQSQAISYSGCLLQ) the chain is Extracellular. An intrachain disulfide couples Cys-97 to Cys-189. The helical transmembrane segment at 101-120 (LYFFMLFVMLEAFLLAVMAY) threads the bilayer. Topologically, residues 121 to 140 (DRYVAICHPLHYILIMSPGL) are cytoplasmic. A helical transmembrane segment spans residues 141–158 (CVFLVSASWIMNALHSLL). The Extracellular segment spans residues 159-196 (HTLLMNSLSFCANHEIPHFFCDIDPLLSLSCTDPFTNE). Residues 197–219 (LVIFITGGLTGLVCVLCLIISYT) form a helical membrane-spanning segment. Topologically, residues 220-236 (NIFSTILKIPSAQGKRK) are cytoplasmic. A helical membrane pass occupies residues 237–259 (AFSTCGSHLSVVSLFFGTSFCVY). The Extracellular portion of the chain corresponds to 260-272 (FIPPSTRSAQKDT). A helical transmembrane segment spans residues 273 to 292 (VASVMYTVVTPMLNPFIYSL). At 293 to 313 (RNQEIKSSLRKLIWVREIHSP) the chain is on the cytoplasmic side.

It belongs to the G-protein coupled receptor 1 family.

It localises to the cell membrane. In terms of biological role, odorant receptor. The polypeptide is Olfactory receptor 1G1 (OR1G1) (Gorilla gorilla gorilla (Western lowland gorilla)).